Reading from the N-terminus, the 338-residue chain is Ketol-acid reductoisomerase (NADP(+)) (338 aa).

Positions 1 to 181 (MHVYYDKDCD…GGGRTGIIET (181 aa)) constitute a KARI N-terminal Rossmann domain. NADP(+) contacts are provided by residues 24 to 27 (YGSQ), R47, S50, T52, and 82 to 85 (DEFQ). H107 is a catalytic residue. Residue G133 coordinates NADP(+). Residues 182-327 (TFKDETETDL…AKLRAMMPWI (146 aa)) form the KARI C-terminal knotted domain. Mg(2+) contacts are provided by D190, E194, E226, and E230. Substrate is bound at residue S251.

Belongs to the ketol-acid reductoisomerase family. Mg(2+) serves as cofactor.

It carries out the reaction (2R)-2,3-dihydroxy-3-methylbutanoate + NADP(+) = (2S)-2-acetolactate + NADPH + H(+). The catalysed reaction is (2R,3R)-2,3-dihydroxy-3-methylpentanoate + NADP(+) = (S)-2-ethyl-2-hydroxy-3-oxobutanoate + NADPH + H(+). It functions in the pathway amino-acid biosynthesis; L-isoleucine biosynthesis; L-isoleucine from 2-oxobutanoate: step 2/4. Its pathway is amino-acid biosynthesis; L-valine biosynthesis; L-valine from pyruvate: step 2/4. In terms of biological role, involved in the biosynthesis of branched-chain amino acids (BCAA). Catalyzes an alkyl-migration followed by a ketol-acid reduction of (S)-2-acetolactate (S2AL) to yield (R)-2,3-dihydroxy-isovalerate. In the isomerase reaction, S2AL is rearranged via a Mg-dependent methyl migration to produce 3-hydroxy-3-methyl-2-ketobutyrate (HMKB). In the reductase reaction, this 2-ketoacid undergoes a metal-dependent reduction by NADPH to yield (R)-2,3-dihydroxy-isovalerate. The polypeptide is Ketol-acid reductoisomerase (NADP(+)) (Cellvibrio japonicus (strain Ueda107) (Pseudomonas fluorescens subsp. cellulosa)).